The sequence spans 255 residues: Diphthine synthase (255 aa).

S-adenosyl-L-methionine-binding positions include L9, D85, V88, S113–I114, L164, A207, and H232.

This sequence belongs to the diphthine synthase family. In terms of assembly, homodimer.

The catalysed reaction is 2-[(3S)-amino-3-carboxypropyl]-L-histidyl-[translation elongation factor 2] + 3 S-adenosyl-L-methionine = diphthine-[translation elongation factor 2] + 3 S-adenosyl-L-homocysteine + 3 H(+). Its pathway is protein modification; peptidyl-diphthamide biosynthesis. Its function is as follows. S-adenosyl-L-methionine-dependent methyltransferase that catalyzes the trimethylation of the amino group of the modified target histidine residue in translation elongation factor 2 (EF-2), to form an intermediate called diphthine. The three successive methylation reactions represent the second step of diphthamide biosynthesis. This chain is Diphthine synthase, found in Methanococcus vannielii (strain ATCC 35089 / DSM 1224 / JCM 13029 / OCM 148 / SB).